The primary structure comprises 204 residues: Holliday junction branch migration complex subunit RuvA (204 aa).

Positions 1–64 are domain I; sequence MIGRLRGVVI…EDAQLLYGFN (64 aa). Residues 65–143 form a domain II region; that stretch reads HKQERALFRE…GWVSHDLFSP (79 aa). Residues 144–155 form a flexible linker region; the sequence is AEISLPARESVL. The tract at residues 156–204 is domain III; it reads RAPDSSEEAASALVALGYKPQQASQIVSKIAKEGMSVEDIIRESLRSLV.

The protein belongs to the RuvA family. Homotetramer. Forms an RuvA(8)-RuvB(12)-Holliday junction (HJ) complex. HJ DNA is sandwiched between 2 RuvA tetramers; dsDNA enters through RuvA and exits via RuvB. An RuvB hexamer assembles on each DNA strand where it exits the tetramer. Each RuvB hexamer is contacted by two RuvA subunits (via domain III) on 2 adjacent RuvB subunits; this complex drives branch migration. In the full resolvosome a probable DNA-RuvA(4)-RuvB(12)-RuvC(2) complex forms which resolves the HJ.

It localises to the cytoplasm. The RuvA-RuvB-RuvC complex processes Holliday junction (HJ) DNA during genetic recombination and DNA repair, while the RuvA-RuvB complex plays an important role in the rescue of blocked DNA replication forks via replication fork reversal (RFR). RuvA specifically binds to HJ cruciform DNA, conferring on it an open structure. The RuvB hexamer acts as an ATP-dependent pump, pulling dsDNA into and through the RuvAB complex. HJ branch migration allows RuvC to scan DNA until it finds its consensus sequence, where it cleaves and resolves the cruciform DNA. In Aeromonas salmonicida (strain A449), this protein is Holliday junction branch migration complex subunit RuvA.